The chain runs to 377 residues: MKTFTDRWRQLEWDDIRLRINGKTAADVERALNAAHLSRDDLMALLSPAAADYLEPIAQRAQRLTRQRFGNTVSFYVPLYLSNLCANDCTYCGFSMSNRIKRKTLDEVDIQRECDAIRKLGFEHLLLVTGEHQAKVGMDYFRRHLPTIRRQFSSLQMEVQPLSQENYAELKTLGIDGVMVYQETYHEAIYAQHHLKGKKQDFFWRLETPDRLGRAGIDKIGLGALIGLSDNWRVDCYMVAEHLLWMQKHYWQSRYSVSFPRLRPCTGGVEPASVMDEKQLVQTICAFRLLAPEIELSLSTRESPWFRDHVIPLAINNVSAFSKTQPGGYADDHPELEQFSPHDARRPETVASALSAQGLQPVWKDWDSWLGRASQTR.

A Radical SAM core domain is found at 71–301; the sequence is NTVSFYVPLY…PEIELSLSTR (231 aa). Residues Cys85, Cys89, and Cys92 each contribute to the [4Fe-4S] cluster site.

It belongs to the radical SAM superfamily. ThiH family. In terms of assembly, forms a heterodimer with ThiG. Requires [4Fe-4S] cluster as cofactor.

It carries out the reaction L-tyrosine + S-adenosyl-L-methionine + NADPH = 2-iminoacetate + 4-methylphenol + 5'-deoxyadenosine + L-methionine + NADP(+). The protein operates within cofactor biosynthesis; thiamine diphosphate biosynthesis. Catalyzes the radical-mediated cleavage of tyrosine to 2-iminoacetate and 4-cresol. This is 2-iminoacetate synthase (thiH) from Salmonella typhimurium (strain LT2 / SGSC1412 / ATCC 700720).